The chain runs to 327 residues: Ribosomal RNA small subunit methyltransferase H (327 aa).

Residues 36-38 (GGH), D55, L89, D103, and Q110 contribute to the S-adenosyl-L-methionine site. The segment at 286-327 (GAEPASDTEIEQNARAGSVRLRAAERTAAEPGRAHNPTGGVR) is disordered.

The protein belongs to the methyltransferase superfamily. RsmH family.

It localises to the cytoplasm. The catalysed reaction is cytidine(1402) in 16S rRNA + S-adenosyl-L-methionine = N(4)-methylcytidine(1402) in 16S rRNA + S-adenosyl-L-homocysteine + H(+). Specifically methylates the N4 position of cytidine in position 1402 (C1402) of 16S rRNA. The chain is Ribosomal RNA small subunit methyltransferase H from Parafrankia sp. (strain EAN1pec).